The sequence spans 240 residues: Sugar fermentation stimulation protein homolog (240 aa).

It belongs to the SfsA family.

This is Sugar fermentation stimulation protein homolog from Natranaerobius thermophilus (strain ATCC BAA-1301 / DSM 18059 / JW/NM-WN-LF).